We begin with the raw amino-acid sequence, 257 residues long: AN1-type zinc finger protein 2B (257 aa).

AN1-type zinc fingers lie at residues 4 to 52 and 94 to 142; these read PDLG…QKDI and KIFT…HPTS. Residues Cys-10, Cys-15, Cys-25, Cys-28, Cys-33, His-36, His-42, Cys-44, Cys-100, Cys-105, Cys-115, Cys-118, Cys-123, His-126, His-132, and Cys-134 each coordinate Zn(2+). Residues 141-151 are VCP/p97-interacting motif (VIM); sequence TSRAGLAAISR. The tract at residues 153–187 is disordered; sequence QAVASTSTVPSPSQTMPSCTSPSRATTRSPSWTAP. Positions 155–171 are enriched in polar residues; the sequence is VASTSTVPSPSQTMPSC. Phosphoserine occurs at positions 163 and 173. Residues 172–186 show a composition bias toward low complexity; it reads TSPSRATTRSPSWTA. UIM domains are found at residues 197–216 and 221–240; these read SEDE…TKPQ and QEEE…AEYQ. At Cys-254 the chain carries Cysteine methyl ester. Cys-254 carries the S-geranylgeranyl cysteine lipid modification. The short motif at 254–257 is the CAAX motif element; it reads CSLC. The propeptide at 255–257 is removed in mature form; sequence SLC.

Binds 'Lys-48'-linked polyubiquitin chains of ubiquitinated proteins. Associates with the proteasome complex; upon exposure to arsenite. Interacts (via VIM motif) with VCP; the interaction is direct. Interacts with BAG6. Interacts with IGF1R (nascent precursor form). Interacts with DERL1, FAF2, NPLOC4 and UFD1; probably through VCP. Post-translationally, phosphorylated by MAPK14. Phosphorylation has no effect on association with the proteasome complex.

The protein localises to the endoplasmic reticulum membrane. Plays a role in protein homeostasis by regulating both the translocation and the ubiquitin-mediated proteasomal degradation of nascent proteins at the endoplasmic reticulum. It is involved in the regulation of signal-mediated translocation of proteins into the endoplasmic reticulum. It also plays a role in the ubiquitin-mediated proteasomal degradation of proteins for which signal-mediated translocation to the endoplasmic reticulum has failed. May therefore function in the endoplasmic reticulum stress-induced pre-emptive quality control, a mechanism that selectively attenuates the translocation of newly synthesized proteins into the endoplasmic reticulum and reroutes them to the cytosol for proteasomal degradation. By controlling the steady-state expression of the IGF1R receptor, indirectly regulates the insulin-like growth factor receptor signaling pathway. The polypeptide is AN1-type zinc finger protein 2B (Homo sapiens (Human)).